Consider the following 388-residue polypeptide: Staphopain A (388 aa).

An N-terminal signal peptide occupies residues 1 to 25 (MKRNFPKLIALSLIFSLSITPIANA). Positions 26 to 214 (ESNSNIKAKD…TSQFKSNNYT (189 aa)) are excised as a propeptide. Residues cysteine 238, histidine 334, and asparagine 355 contribute to the active site.

Belongs to the peptidase C47 family. In the cytoplasm, prematurely activated/folded ScpA forms a stable non-covalent complex with ScpB. In terms of processing, cleavage leads to the activation of ScpA probably by an auto-catalytic manner.

It localises to the secreted. It carries out the reaction Broad endopeptidase action on proteins including elastin, but rather limited hydrolysis of small-molecule substrates. Assays are conveniently made with hemoglobin, casein or Z-Phe-Arg-NHMec as substrate.. Its activity is regulated as follows. Prematurely activated/folded staphopain A is inhibited by staphostatin A (ScpB), which is probably required to protect staphylococcal cytoplasmic proteins from degradation by ScpA. Also inactivated by heavy metal ions such as Hg(2+) or Ag(+), iodoacetamide, E-64 and human plasma. Functionally, cysteine protease that plays an important role in the inhibition of host innate immune response. Cleaves host elastins found in connective tissues, pulmonary surfactant protein A in the lungs, and the chemokine receptor CXCR2 on leukocytes. Proteolytic cleavage of surfactant protein A impairs bacterial phagocytosis by neutrophils while CXCR2 degradation blocks neutrophil activation and chemotaxis. Additionally, promotes vascular leakage by activating the plasma kallikerin/kinin system, resulting in hypotension. This chain is Staphopain A (sspP), found in Staphylococcus aureus.